Consider the following 72-residue polypeptide: UPF0270 protein YheU (72 aa).

It belongs to the UPF0270 family.

The protein is UPF0270 protein YheU of Salmonella dublin (strain CT_02021853).